The primary structure comprises 401 residues: tRNA(Met) cytidine acetate ligase (401 aa).

ATP contacts are provided by residues 7 to 20 (IVEY…HLYH), Gly-102, Asn-164, and Arg-189.

Belongs to the TmcAL family.

It localises to the cytoplasm. It catalyses the reaction cytidine(34) in elongator tRNA(Met) + acetate + ATP = N(4)-acetylcytidine(34) in elongator tRNA(Met) + AMP + diphosphate. Its function is as follows. Catalyzes the formation of N(4)-acetylcytidine (ac(4)C) at the wobble position of elongator tRNA(Met), using acetate and ATP as substrates. First activates an acetate ion to form acetyladenylate (Ac-AMP) and then transfers the acetyl group to tRNA to form ac(4)C34. The protein is tRNA(Met) cytidine acetate ligase of Caldanaerobacter subterraneus subsp. tengcongensis (strain DSM 15242 / JCM 11007 / NBRC 100824 / MB4) (Thermoanaerobacter tengcongensis).